We begin with the raw amino-acid sequence, 354 residues long: Neutral protease 2 homolog SNOG_02177 (354 aa).

A signal peptide spans 1-19 (MKFQILSVAALASLASAVS). The propeptide occupies 20–182 (DALDKRDSPL…WIDLAKRTIV (163 aa)). Intrachain disulfides connect C186/C257 and C264/C282. N214 carries an N-linked (GlcNAc...) asparagine glycan. Residue H306 coordinates Zn(2+). E307 is a catalytic residue. H310 is a Zn(2+) binding site.

It belongs to the peptidase M35 family. Requires Zn(2+) as cofactor.

The protein localises to the secreted. The enzyme catalyses Preferential cleavage of bonds with hydrophobic residues in P1'. Also 3-Asn-|-Gln-4 and 8-Gly-|-Ser-9 bonds in insulin B chain.. Its function is as follows. Secreted metalloproteinase that allows assimilation of proteinaceous substrates. Shows high activities on basic nuclear substrates such as histone and protamine. In Phaeosphaeria nodorum (strain SN15 / ATCC MYA-4574 / FGSC 10173) (Glume blotch fungus), this protein is Neutral protease 2 homolog SNOG_02177.